The sequence spans 248 residues: Transcription factor MYBC1 (248 aa).

The myb-like GARP DNA-binding region spans 102–161 (TLKRPRLVWTPQLHKRFVDAVGHLGIKNAVPKTIMQLMSVEGLTRENVASHLQKYRLYLR).

As to expression, expressed in roots, leaves, stems, petioles, filaments, stigma, pedicels, sepals, anthers, petals, and siliques.

It is found in the nucleus. In terms of biological role, probable transcription factor that acts as a negative regulator of freezing tolerance via a CBF-independent pathway. The chain is Transcription factor MYBC1 from Arabidopsis thaliana (Mouse-ear cress).